We begin with the raw amino-acid sequence, 178 residues long: Transcription antitermination protein NusB (178 aa).

This sequence belongs to the NusB family.

Involved in transcription antitermination. Required for transcription of ribosomal RNA (rRNA) genes. Binds specifically to the boxA antiterminator sequence of the ribosomal RNA (rrn) operons. This Alkalilimnicola ehrlichii (strain ATCC BAA-1101 / DSM 17681 / MLHE-1) protein is Transcription antitermination protein NusB.